We begin with the raw amino-acid sequence, 460 residues long: Mitochondrial distribution and morphology protein 10 (460 aa).

The protein belongs to the MDM10 family. As to quaternary structure, component of the ER-mitochondria encounter structure (ERMES) or MDM complex, composed of MMM1, MDM10, MDM12 and MDM34. Associates with the mitochondrial outer membrane sorting assembly machinery SAM(core) complex.

Its subcellular location is the mitochondrion outer membrane. Component of the ERMES/MDM complex, which serves as a molecular tether to connect the endoplasmic reticulum and mitochondria. Components of this complex are involved in the control of mitochondrial shape and protein biogenesis and may function in phospholipid exchange. MDM10 is involved in the late assembly steps of the general translocase of the mitochondrial outer membrane (TOM complex). Functions in the TOM40-specific route of the assembly of outer membrane beta-barrel proteins, including the association of TOM40 with the receptor TOM22 and small TOM proteins. Can associate with the SAM(core) complex as well as the MDM12-MMM1 complex, both involved in late steps of the major beta-barrel assembly pathway, that is responsible for biogenesis of all outer membrane beta-barrel proteins. May act as a switch that shuttles between both complexes and channels precursor proteins into the TOM40-specific pathway. Plays a role in mitochondrial morphology and in the inheritance of mitochondria. This chain is Mitochondrial distribution and morphology protein 10, found in Candida glabrata (strain ATCC 2001 / BCRC 20586 / JCM 3761 / NBRC 0622 / NRRL Y-65 / CBS 138) (Yeast).